The following is a 304-amino-acid chain: ATP phosphoribosyltransferase (304 aa).

The protein belongs to the ATP phosphoribosyltransferase family. Long subfamily. The cofactor is Mg(2+).

The protein localises to the cytoplasm. The catalysed reaction is 1-(5-phospho-beta-D-ribosyl)-ATP + diphosphate = 5-phospho-alpha-D-ribose 1-diphosphate + ATP. It participates in amino-acid biosynthesis; L-histidine biosynthesis; L-histidine from 5-phospho-alpha-D-ribose 1-diphosphate: step 1/9. With respect to regulation, feedback inhibited by histidine. In terms of biological role, catalyzes the condensation of ATP and 5-phosphoribose 1-diphosphate to form N'-(5'-phosphoribosyl)-ATP (PR-ATP). Has a crucial role in the pathway because the rate of histidine biosynthesis seems to be controlled primarily by regulation of HisG enzymatic activity. The chain is ATP phosphoribosyltransferase from Xanthomonas euvesicatoria pv. vesicatoria (strain 85-10) (Xanthomonas campestris pv. vesicatoria).